Reading from the N-terminus, the 156-residue chain is 6,7-dimethyl-8-ribityllumazine synthase (156 aa).

5-amino-6-(D-ribitylamino)uracil contacts are provided by residues Phe23, Ala57–Glu59, and Ala81–Ile83. Gly86–Thr87 contributes to the (2S)-2-hydroxy-3-oxobutyl phosphate binding site. The active-site Proton donor is His89. Residue Phe114 coordinates 5-amino-6-(D-ribitylamino)uracil. Arg128 provides a ligand contact to (2S)-2-hydroxy-3-oxobutyl phosphate.

This sequence belongs to the DMRL synthase family.

The enzyme catalyses (2S)-2-hydroxy-3-oxobutyl phosphate + 5-amino-6-(D-ribitylamino)uracil = 6,7-dimethyl-8-(1-D-ribityl)lumazine + phosphate + 2 H2O + H(+). The protein operates within cofactor biosynthesis; riboflavin biosynthesis; riboflavin from 2-hydroxy-3-oxobutyl phosphate and 5-amino-6-(D-ribitylamino)uracil: step 1/2. Functionally, catalyzes the formation of 6,7-dimethyl-8-ribityllumazine by condensation of 5-amino-6-(D-ribitylamino)uracil with 3,4-dihydroxy-2-butanone 4-phosphate. This is the penultimate step in the biosynthesis of riboflavin. The protein is 6,7-dimethyl-8-ribityllumazine synthase of Helicobacter pylori (strain G27).